A 218-amino-acid polypeptide reads, in one-letter code: ATP-dependent Clp protease proteolytic subunit 2 (218 aa).

Serine 114 functions as the Nucleophile in the catalytic mechanism. Residue histidine 139 is part of the active site.

Belongs to the peptidase S14 family. Fourteen ClpP subunits assemble into 2 heptameric rings which stack back to back to give a disk-like structure with a central cavity, resembling the structure of eukaryotic proteasomes.

Its subcellular location is the cytoplasm. The enzyme catalyses Hydrolysis of proteins to small peptides in the presence of ATP and magnesium. alpha-casein is the usual test substrate. In the absence of ATP, only oligopeptides shorter than five residues are hydrolyzed (such as succinyl-Leu-Tyr-|-NHMec, and Leu-Tyr-Leu-|-Tyr-Trp, in which cleavage of the -Tyr-|-Leu- and -Tyr-|-Trp bonds also occurs).. Its function is as follows. Cleaves peptides in various proteins in a process that requires ATP hydrolysis. Has a chymotrypsin-like activity. Plays a major role in the degradation of misfolded proteins. Probably partially responsible for degradation of ECF sigma factor SigR prime. The chain is ATP-dependent Clp protease proteolytic subunit 2 from Streptomyces coelicolor (strain ATCC BAA-471 / A3(2) / M145).